A 164-amino-acid chain; its full sequence is Photosystem II extrinsic protein V (164 aa).

An N-terminal signal peptide occupies residues 1-27 (MALKSKFLVGSILATFILNGFSSPAQA). Heme c is bound by residues Cys-64, Cys-67, His-68, and His-119.

This sequence belongs to the cytochrome c family. PsbV subfamily. In terms of assembly, PSII is composed of 1 copy each of membrane proteins PsbA, PsbB, PsbC, PsbD, PsbE, PsbF, PsbH, PsbI, PsbJ, PsbK, PsbL, PsbM, PsbT, PsbY, PsbZ, Psb30/Ycf12, at least 3 peripheral proteins of the oxygen-evolving complex and a large number of cofactors. It forms dimeric complexes. Requires heme c as cofactor.

It is found in the plastid. Its subcellular location is the chloroplast thylakoid membrane. Its function is as follows. One of the extrinsic, lumenal subunits of photosystem II (PSII). PSII is a light-driven water plastoquinone oxidoreductase, using light energy to abstract electrons from H(2)O, generating a proton gradient subsequently used for ATP formation. The extrinsic proteins stabilize the structure of photosystem II oxygen-evolving complex (OEC), the ion environment of oxygen evolution and protect the OEC against heat-induced inactivation. The polypeptide is Photosystem II extrinsic protein V (Emiliania huxleyi (Coccolithophore)).